Reading from the N-terminus, the 339-residue chain is Methionine import ATP-binding protein MetN 2 (339 aa).

One can recognise an ABC transporter domain in the interval 2 to 241; the sequence is ISFNNVSKVY…PKTTTTQNFV (240 aa). Residue 38–45 participates in ATP binding; that stretch reads GFSGAGKS.

This sequence belongs to the ABC transporter superfamily. Methionine importer (TC 3.A.1.24) family. As to quaternary structure, the complex is composed of two ATP-binding proteins (MetN), two transmembrane proteins (MetI) and a solute-binding protein (MetQ).

It is found in the cell membrane. It catalyses the reaction L-methionine(out) + ATP + H2O = L-methionine(in) + ADP + phosphate + H(+). The catalysed reaction is D-methionine(out) + ATP + H2O = D-methionine(in) + ADP + phosphate + H(+). In terms of biological role, part of the ABC transporter complex MetNIQ involved in methionine import. Responsible for energy coupling to the transport system. This chain is Methionine import ATP-binding protein MetN 2, found in Bacillus anthracis.